We begin with the raw amino-acid sequence, 1174 residues long: Pesticidal crystal protein Cry1Fa (1174 aa).

This sequence belongs to the delta endotoxin family.

Promotes colloidosmotic lysis by binding to the midgut epithelial cells of many lepidopteran larvae. The protein is Pesticidal crystal protein Cry1Fa (cry1Fa) of Bacillus thuringiensis subsp. aizawai.